The chain runs to 176 residues: MDLPGPIHEILVLFGGFVLLLGGLGVVLLTNPIYSAFSLGLVLVCISLFYFLLNSYFVAVAQLLIYVGAINVLIIFAVMFVNGSEWSKDKNYWTIGDGFTLLLCITIPFSLMTTIPDTSWYGILWTTRSNQIVEQGLINNVQQIGIHLATDFYLPFELISLILLVSLIGAITMARQ.

5 helical membrane passes run 10 to 30, 33 to 53, 60 to 80, 95 to 115, and 152 to 172; these read ILVL…VLLT, IYSA…YFLL, VAQL…AVMF, IGDG…MTTI, and FYLP…GAIT.

The protein belongs to the complex I subunit 6 family. As to quaternary structure, NDH is composed of at least 16 different subunits, 5 of which are encoded in the nucleus.

The protein resides in the plastid. Its subcellular location is the chloroplast thylakoid membrane. It carries out the reaction a plastoquinone + NADH + (n+1) H(+)(in) = a plastoquinol + NAD(+) + n H(+)(out). The catalysed reaction is a plastoquinone + NADPH + (n+1) H(+)(in) = a plastoquinol + NADP(+) + n H(+)(out). Its function is as follows. NDH shuttles electrons from NAD(P)H:plastoquinone, via FMN and iron-sulfur (Fe-S) centers, to quinones in the photosynthetic chain and possibly in a chloroplast respiratory chain. The immediate electron acceptor for the enzyme in this species is believed to be plastoquinone. Couples the redox reaction to proton translocation, and thus conserves the redox energy in a proton gradient. This Saccharum hybrid (Sugarcane) protein is NAD(P)H-quinone oxidoreductase subunit 6, chloroplastic (ndhG).